The sequence spans 83 residues: Probable calcium-binding protein CML29 (83 aa).

EF-hand domains are found at residues 5–40 and 43–75; these read TEKA…LGSV and DDVK…NRGL. The Ca(2+) site is built by D18, N20, D22, K24, E29, D53, D55, D57, N59, and E64.

Functionally, potential calcium sensor. This Arabidopsis thaliana (Mouse-ear cress) protein is Probable calcium-binding protein CML29 (CML29).